The sequence spans 192 residues: Crossover junction endodeoxyribonuclease RuvC (192 aa).

Residues D20, E80, and D153 contribute to the active site. Mg(2+) is bound by residues D20, E80, and D153.

The protein belongs to the RuvC family. As to quaternary structure, homodimer which binds Holliday junction (HJ) DNA. The HJ becomes 2-fold symmetrical on binding to RuvC with unstacked arms; it has a different conformation from HJ DNA in complex with RuvA. In the full resolvosome a probable DNA-RuvA(4)-RuvB(12)-RuvC(2) complex forms which resolves the HJ. Mg(2+) serves as cofactor.

Its subcellular location is the cytoplasm. The catalysed reaction is Endonucleolytic cleavage at a junction such as a reciprocal single-stranded crossover between two homologous DNA duplexes (Holliday junction).. Functionally, the RuvA-RuvB-RuvC complex processes Holliday junction (HJ) DNA during genetic recombination and DNA repair. Endonuclease that resolves HJ intermediates. Cleaves cruciform DNA by making single-stranded nicks across the HJ at symmetrical positions within the homologous arms, yielding a 5'-phosphate and a 3'-hydroxyl group; requires a central core of homology in the junction. The consensus cleavage sequence is 5'-(A/T)TT(C/G)-3'. Cleavage occurs on the 3'-side of the TT dinucleotide at the point of strand exchange. HJ branch migration catalyzed by RuvA-RuvB allows RuvC to scan DNA until it finds its consensus sequence, where it cleaves and resolves the cruciform DNA. In Christiangramia forsetii (strain DSM 17595 / CGMCC 1.15422 / KT0803) (Gramella forsetii), this protein is Crossover junction endodeoxyribonuclease RuvC.